Reading from the N-terminus, the 447-residue chain is Phospholipase A(1) LCAT3 (447 aa).

The Acyl-ester intermediate role is filled by S177. Residues D384 and H409 each act as charge relay system in the active site.

It belongs to the AB hydrolase superfamily. Lipase family.

It localises to the microsome membrane. It catalyses the reaction a 1,2-diacyl-sn-glycero-3-phosphocholine + H2O = a 2-acyl-sn-glycero-3-phosphocholine + a fatty acid + H(+). Hydrolyzes the sn-1 acylester bond of phospholipids. Phosphatidylcholine, phosphatidylethanolamine and phosphatidic acid can be used as substrates. Weak activity with lysophosphatidylcholine and no activity with tripalmitoylglycerol and cholesteryl oleate. Seems to have a preference for unsaturated fatty acids at the sn-1 position. The sequence is that of Phospholipase A(1) LCAT3 (LCAT3) from Arabidopsis thaliana (Mouse-ear cress).